A 1124-amino-acid polypeptide reads, in one-letter code: Phytochrome A1 (1124 aa).

Positions methionine 1–alanine 14 are enriched in low complexity. Residues methionine 1 to alanine 20 are disordered. Positions serine 218–leucine 401 constitute a GAF domain. Position 323 (cysteine 323) interacts with phytochromobilin. One can recognise a PAS 1 domain in the interval valine 617–lysine 687. One can recognise a PAC domain in the interval arginine 690 to arginine 746. Residues isoleucine 747 to glycine 821 form the PAS 2 domain. Residues tyrosine 901–valine 1118 enclose the Histidine kinase domain.

It belongs to the phytochrome family. As to quaternary structure, homodimer. Contains one covalently linked phytochromobilin chromophore.

Regulatory photoreceptor which exists in two forms that are reversibly interconvertible by light: the Pr form that absorbs maximally in the red region of the spectrum and the Pfr form that absorbs maximally in the far-red region. Photoconversion of Pr to Pfr induces an array of morphogenic responses, whereas reconversion of Pfr to Pr cancels the induction of those responses. Pfr controls the expression of a number of nuclear genes including those encoding the small subunit of ribulose-bisphosphate carboxylase, chlorophyll A/B binding protein, protochlorophyllide reductase, rRNA, etc. It also controls the expression of its own gene(s) in a negative feedback fashion. The chain is Phytochrome A1 (PHYA1) from Nicotiana tabacum (Common tobacco).